The following is a 454-amino-acid chain: Kynurenine--oxoglutarate transaminase 3 (454 aa).

F2 bears the N-acetylserine mark. Residue G71 coordinates substrate. K116 carries the post-translational modification N6-acetyllysine; alternate. At K116 the chain carries N6-succinyllysine; alternate. N218 is a binding site for substrate. K280 carries the post-translational modification N6-(pyridoxal phosphate)lysine. R429 serves as a coordination point for substrate.

It belongs to the class-I pyridoxal-phosphate-dependent aminotransferase family. In terms of assembly, homodimer. The cofactor is pyridoxal 5'-phosphate.

It catalyses the reaction L-kynurenine + 2-oxoglutarate = kynurenate + L-glutamate + H2O. The catalysed reaction is L-kynurenine + glyoxylate = kynurenate + glycine + H2O. The enzyme catalyses 3-hydroxy-L-kynurenine + glyoxylate = xanthurenate + glycine + H2O. It carries out the reaction an S-substituted L-cysteine + H2O = a thiol + pyruvate + NH4(+). It functions in the pathway amino-acid degradation; L-kynurenine degradation; kynurenate from L-kynurenine: step 1/2. In terms of biological role, catalyzes the irreversible transamination of the L-tryptophan metabolite L-kynurenine to form kynurenic acid (KA), an intermediate in the tryptophan catabolic pathway which is also a broad spectrum antagonist of the three ionotropic excitatory amino acid receptors among others. May catalyze the beta-elimination of S-conjugates and Se-conjugates of L-(seleno)cysteine, resulting in the cleavage of the C-S or C-Se bond. Has transaminase activity towards L-kynurenine, tryptophan, phenylalanine, serine, cysteine, methionine, histidine, glutamine and asparagine with glyoxylate as an amino group acceptor (in vitro). Has lower activity with 2-oxoglutarate as amino group acceptor (in vitro). The sequence is that of Kynurenine--oxoglutarate transaminase 3 from Homo sapiens (Human).